We begin with the raw amino-acid sequence, 72 residues long: Translation initiation factor IF-1 (72 aa).

The 72-residue stretch at 1–72 folds into the S1-like domain; that stretch reads MSKDDSIEFE…TKGRITYRMK (72 aa).

This sequence belongs to the IF-1 family. As to quaternary structure, component of the 30S ribosomal translation pre-initiation complex which assembles on the 30S ribosome in the order IF-2 and IF-3, IF-1 and N-formylmethionyl-tRNA(fMet); mRNA recruitment can occur at any time during PIC assembly.

It is found in the cytoplasm. Its function is as follows. One of the essential components for the initiation of protein synthesis. Stabilizes the binding of IF-2 and IF-3 on the 30S subunit to which N-formylmethionyl-tRNA(fMet) subsequently binds. Helps modulate mRNA selection, yielding the 30S pre-initiation complex (PIC). Upon addition of the 50S ribosomal subunit IF-1, IF-2 and IF-3 are released leaving the mature 70S translation initiation complex. This Xanthomonas euvesicatoria pv. vesicatoria (strain 85-10) (Xanthomonas campestris pv. vesicatoria) protein is Translation initiation factor IF-1.